An 89-amino-acid chain; its full sequence is Small ribosomal subunit protein uS15 (89 aa).

It belongs to the universal ribosomal protein uS15 family. Part of the 30S ribosomal subunit. Forms a bridge to the 50S subunit in the 70S ribosome, contacting the 23S rRNA.

Functionally, one of the primary rRNA binding proteins, it binds directly to 16S rRNA where it helps nucleate assembly of the platform of the 30S subunit by binding and bridging several RNA helices of the 16S rRNA. Its function is as follows. Forms an intersubunit bridge (bridge B4) with the 23S rRNA of the 50S subunit in the ribosome. The sequence is that of Small ribosomal subunit protein uS15 from Micrococcus luteus (strain ATCC 4698 / DSM 20030 / JCM 1464 / CCM 169 / CCUG 5858 / IAM 1056 / NBRC 3333 / NCIMB 9278 / NCTC 2665 / VKM Ac-2230) (Micrococcus lysodeikticus).